We begin with the raw amino-acid sequence, 573 residues long: Ribonuclease J (573 aa).

The tract at residues 1-29 is disordered; that stretch reads MENQERKPRRRRRRRPQEGSQGGPQDHVE. Histidine 93, histidine 95, aspartate 97, histidine 98, histidine 168, and aspartate 190 together coordinate Zn(2+). Substrate-binding positions include 259–261 and 390–394; these read ASH and HASGH. Histidine 416 contacts Zn(2+).

Belongs to the metallo-beta-lactamase superfamily. RNA-metabolizing metallo-beta-lactamase-like family. Bacterial RNase J subfamily. In terms of assembly, homodimer. May be a subunit of the RNA degradosome. Requires Zn(2+) as cofactor.

It localises to the cytoplasm. Functionally, an RNase that has endonuclease and possibly 5'-3' exonuclease activity. Probably involved in maturation of rRNA and in some organisms also mRNA maturation and/or decay. In Thermus thermophilus (strain ATCC BAA-163 / DSM 7039 / HB27), this protein is Ribonuclease J.